Reading from the N-terminus, the 563-residue chain is Cytochrome P450 monooxygenase efuG (563 aa).

The helical transmembrane segment at 10–30 threads the bilayer; sequence ITSHQWGIGSVFLLISIPLIV. The tract at residues 462–482 is disordered; the sequence is PDDPQSGPRKDAKKQKAKSDG. Cys505 contacts heme.

It belongs to the cytochrome P450 family. Requires heme as cofactor.

Its subcellular location is the membrane. The protein operates within secondary metabolite biosynthesis; terpenoid biosynthesis. In terms of biological role, cytochrome P450 monooxygenase; part of the gene cluster that mediates the biosynthesis of enfumafungin, a glycosylated fernene-type triterpenoid with potent antifungal activity, mediated by its interaction with beta-1,3-glucan synthase and the fungal cell wall. The pathway begins with the terpene cyclase-glycosyl transferase fusion protein that most likely uses 2,3-oxidosqualene as substrate and catalyzes glycosylation immediately after cyclization. The fernene glycoside then could be processed by the desaturase efuI which catalyzes isomerization of a double bond established by efuA to form the core structure. The latter would then undergo a series of hydroxylations in unknown order at C-2, C-19, C-23 and C-25, which would be catalyzed by two of the three cytochrome P450 monooxygenases efuB, efuG or efuH. The hydroxy-group at C-25 becomes oxidized by the dehydrogenase efuE to enable a spontaneous, non-enzymatic hemiacetal formation with C-23. After hydroxylation at C-2, acetylation by the acetyltransferase efuC takes place. The final steps in enfumafungin biosynthesis require expansion of the 5-membered ring by lactonization via a Baeyer-Villiger reaction mediated by one of the BGC's cytochrome P450 monooxygenases (efuB, efuG or efuH) followed by ring cleavage. This type of reaction would establish a double bond between C-20 and C-21 which could be reduced by the reductase efuL to form the final product. The sequence is that of Cytochrome P450 monooxygenase efuG from Hormonema carpetanum.